The primary structure comprises 181 residues: Histone deacetylase complex subunit SAP30L (181 aa).

The segment at 26–74 adopts an Atypical zinc-finger fold; it reads CCLIDGGERCPRPAGNASFSKRVQKSISQKKLKLDIDKSVRHLYICDFH. The disordered stretch occupies residues 82–103; sequence RNKRKRKTSDDGGDSPEHETDV. The short motif at 83 to 88 is the Nuclear localization signal (NLS) element; that stretch reads NKRKRK. Residues 85 to 87 are important for DNA and phosphoinositide binding; that stretch reads RKR.

The protein belongs to the SAP30 family. As to quaternary structure, interacts with components of the histone deacetylase complex sin3a, hdac1 and hdac2. Binds histones and nucleosomes.

It localises to the nucleus. It is found in the nucleolus. Functions as a transcription repressor, probably via its interaction with histone deacetylase complexes. Involved in the functional recruitment of the class 1 Sin3-histone deacetylase complex (HDAC) to the nucleolus. Binds DNA, apparently without sequence-specificity, and bends bound double-stranded DNA. Binds phosphoinositol phosphates (phosphoinositol 3-phosphate, phosphoinositol 4-phosphate and phosphoinositol 5-phosphate) via the same basic sequence motif that mediates DNA binding and nuclear import. The chain is Histone deacetylase complex subunit SAP30L (sap30l) from Xenopus tropicalis (Western clawed frog).